The primary structure comprises 79 residues: Probable [Fe-S]-dependent transcriptional repressor (79 aa).

The iron-sulfur cluster site is built by Cys56, Cys61, Cys64, and Cys71.

It belongs to the FeoC family.

Functionally, may function as a transcriptional regulator that controls feoABC expression. The sequence is that of Probable [Fe-S]-dependent transcriptional repressor from Klebsiella pneumoniae subsp. pneumoniae (strain ATCC 700721 / MGH 78578).